Consider the following 373-residue polypeptide: tRNA-specific 2-thiouridylase MnmA (373 aa).

ATP contacts are provided by residues Gly12–Ser19 and Met38. Residues Asn98–Asp100 are interaction with target base in tRNA. The active-site Nucleophile is Cys103. Residues Cys103 and Cys200 are joined by a disulfide bond. Gly127 contributes to the ATP binding site. Residues Lys150–Gln152 are interaction with tRNA. The Cysteine persulfide intermediate role is filled by Cys200. Residues Arg312–Tyr313 form an interaction with tRNA region.

Belongs to the MnmA/TRMU family.

It is found in the cytoplasm. The catalysed reaction is S-sulfanyl-L-cysteinyl-[protein] + uridine(34) in tRNA + AH2 + ATP = 2-thiouridine(34) in tRNA + L-cysteinyl-[protein] + A + AMP + diphosphate + H(+). In terms of biological role, catalyzes the 2-thiolation of uridine at the wobble position (U34) of tRNA, leading to the formation of s(2)U34. The chain is tRNA-specific 2-thiouridylase MnmA from Streptococcus pyogenes serotype M6 (strain ATCC BAA-946 / MGAS10394).